The chain runs to 189 residues: Glycerol-3-phosphate acyltransferase (189 aa).

Helical transmembrane passes span Met-1–Leu-21, Lys-50–Ala-70, Trp-72–Leu-92, Met-111–Phe-131, and Leu-151–Val-171.

This sequence belongs to the PlsY family. Probably interacts with PlsX.

Its subcellular location is the cell inner membrane. It catalyses the reaction an acyl phosphate + sn-glycerol 3-phosphate = a 1-acyl-sn-glycero-3-phosphate + phosphate. The protein operates within lipid metabolism; phospholipid metabolism. Functionally, catalyzes the transfer of an acyl group from acyl-phosphate (acyl-PO(4)) to glycerol-3-phosphate (G3P) to form lysophosphatidic acid (LPA). This enzyme utilizes acyl-phosphate as fatty acyl donor, but not acyl-CoA or acyl-ACP. The sequence is that of Glycerol-3-phosphate acyltransferase from Pseudomonas paraeruginosa (strain DSM 24068 / PA7) (Pseudomonas aeruginosa (strain PA7)).